Consider the following 414-residue polypeptide: Esterase FrsA (414 aa).

Belongs to the FrsA family.

The enzyme catalyses a carboxylic ester + H2O = an alcohol + a carboxylate + H(+). Functionally, catalyzes the hydrolysis of esters. This is Esterase FrsA from Enterobacter sp. (strain 638).